A 284-amino-acid chain; its full sequence is 3-methyl-2-oxobutanoate hydroxymethyltransferase (284 aa).

Mg(2+) is bound by residues D52 and D91. Residues 52–53 (DS), D91, and K121 contribute to the 3-methyl-2-oxobutanoate site. Residue E123 participates in Mg(2+) binding. E191 (proton acceptor) is an active-site residue.

This sequence belongs to the PanB family. In terms of assembly, homodecamer; pentamer of dimers. Mg(2+) serves as cofactor.

The protein resides in the cytoplasm. It carries out the reaction 3-methyl-2-oxobutanoate + (6R)-5,10-methylene-5,6,7,8-tetrahydrofolate + H2O = 2-dehydropantoate + (6S)-5,6,7,8-tetrahydrofolate. The protein operates within cofactor biosynthesis; (R)-pantothenate biosynthesis; (R)-pantoate from 3-methyl-2-oxobutanoate: step 1/2. Its function is as follows. Catalyzes the reversible reaction in which hydroxymethyl group from 5,10-methylenetetrahydrofolate is transferred onto alpha-ketoisovalerate to form ketopantoate. The sequence is that of 3-methyl-2-oxobutanoate hydroxymethyltransferase from Deinococcus radiodurans (strain ATCC 13939 / DSM 20539 / JCM 16871 / CCUG 27074 / LMG 4051 / NBRC 15346 / NCIMB 9279 / VKM B-1422 / R1).